Consider the following 521-residue polypeptide: Signal recognition particle protein (521 aa).

Residues 107–114 (GLQGSGKT), 196–200 (DTAGR), and 254–257 (TKLD) each bind GTP. Positions 436 to 505 (GGMGIPGMGR…MPDGLNELPP (70 aa)) are disordered. A compositionally biased stretch (basic residues) spans 447–462 (SATRKSKGGKGKKRAR).

It belongs to the GTP-binding SRP family. SRP54 subfamily. As to quaternary structure, part of the signal recognition particle protein translocation system, which is composed of SRP and FtsY.

The protein localises to the cytoplasm. It catalyses the reaction GTP + H2O = GDP + phosphate + H(+). Involved in targeting and insertion of nascent membrane proteins into the cytoplasmic membrane. Binds to the hydrophobic signal sequence of the ribosome-nascent chain (RNC) as it emerges from the ribosomes. The SRP-RNC complex is then targeted to the cytoplasmic membrane where it interacts with the SRP receptor FtsY. This chain is Signal recognition particle protein, found in Mycobacterium leprae (strain TN).